The primary structure comprises 307 residues: Myeloid-associated differentiation marker-like protein 2 (307 aa).

2 consecutive MARVEL domains span residues 17–154 (AVTS…ARPG) and 159–303 (YMAT…RIRF). A run of 7 helical transmembrane segments spans residues 53-73 (FCMA…ACEF), 90-110 (AFAM…PLYF), 129-149 (LAAS…VALT), 163-183 (VSGL…GALV), 198-218 (VAVY…SVMG), 229-249 (RLVV…AVIW), and 278-298 (LVVA…LAYS).

Belongs to the MAL family.

The protein resides in the membrane. The chain is Myeloid-associated differentiation marker-like protein 2 (MYADML2) from Homo sapiens (Human).